The following is a 269-amino-acid chain: Putative pyruvate, phosphate dikinase regulatory protein (269 aa).

147–154 (GLSRTSKT) is an ADP binding site.

Belongs to the pyruvate, phosphate/water dikinase regulatory protein family. PDRP subfamily.

The catalysed reaction is N(tele)-phospho-L-histidyl/L-threonyl-[pyruvate, phosphate dikinase] + ADP = N(tele)-phospho-L-histidyl/O-phospho-L-threonyl-[pyruvate, phosphate dikinase] + AMP + H(+). It catalyses the reaction N(tele)-phospho-L-histidyl/O-phospho-L-threonyl-[pyruvate, phosphate dikinase] + phosphate + H(+) = N(tele)-phospho-L-histidyl/L-threonyl-[pyruvate, phosphate dikinase] + diphosphate. Its function is as follows. Bifunctional serine/threonine kinase and phosphorylase involved in the regulation of the pyruvate, phosphate dikinase (PPDK) by catalyzing its phosphorylation/dephosphorylation. The polypeptide is Putative pyruvate, phosphate dikinase regulatory protein (Clostridium botulinum (strain ATCC 19397 / Type A)).